The chain runs to 247 residues: UDP-2,3-diacylglucosamine hydrolase (247 aa).

Positions 8, 10, 41, 79, and 115 each coordinate Mn(2+). Residue 79 to 80 coordinates substrate; it reads NH. The substrate site is built by Asp123, Lys165, Lys168, and His196. Mn(2+) is bound by residues His196 and His198.

Belongs to the LpxH family. Mn(2+) serves as cofactor.

The protein resides in the cell inner membrane. The catalysed reaction is UDP-2-N,3-O-bis[(3R)-3-hydroxytetradecanoyl]-alpha-D-glucosamine + H2O = 2-N,3-O-bis[(3R)-3-hydroxytetradecanoyl]-alpha-D-glucosaminyl 1-phosphate + UMP + 2 H(+). The protein operates within glycolipid biosynthesis; lipid IV(A) biosynthesis; lipid IV(A) from (3R)-3-hydroxytetradecanoyl-[acyl-carrier-protein] and UDP-N-acetyl-alpha-D-glucosamine: step 4/6. Its function is as follows. Hydrolyzes the pyrophosphate bond of UDP-2,3-diacylglucosamine to yield 2,3-diacylglucosamine 1-phosphate (lipid X) and UMP by catalyzing the attack of water at the alpha-P atom. Involved in the biosynthesis of lipid A, a phosphorylated glycolipid that anchors the lipopolysaccharide to the outer membrane of the cell. This chain is UDP-2,3-diacylglucosamine hydrolase, found in Blochmanniella floridana.